The following is a 1388-amino-acid chain: ABC transporter G family member 52 (1388 aa).

The interval M1–D24 is disordered. The region spanning T135 to E406 is the ABC transporter 1 domain. G168 to T175 contacts ATP. The ABC transmembrane type-2 1 domain maps to E484–F697. Helical transmembrane passes span L503 to I523, A541 to I561, I590 to F610, F621 to L641, V646 to I666, W675 to N695, and I732 to L752. The ABC transporter 2 domain occupies I791–Q1043. G836–T843 is an ATP binding site. One can recognise an ABC transmembrane type-2 2 domain in the interval T1116–F1330. 7 consecutive transmembrane segments (helical) span residues I1136–G1156, L1167–V1183, F1223–Y1243, F1250–M1270, M1280–I1300, I1305–L1325, and L1357–G1377.

The protein belongs to the ABC transporter superfamily. ABCG family. PDR (TC 3.A.1.205) subfamily.

The protein localises to the membrane. Functionally, may be a general defense protein. The polypeptide is ABC transporter G family member 52 (Oryza sativa subsp. japonica (Rice)).